A 140-amino-acid polypeptide reads, in one-letter code: 3-hydroxyacyl-[acyl-carrier-protein] dehydratase FabZ (140 aa).

Residue His48 is part of the active site.

The protein belongs to the thioester dehydratase family. FabZ subfamily.

It localises to the cytoplasm. It carries out the reaction a (3R)-hydroxyacyl-[ACP] = a (2E)-enoyl-[ACP] + H2O. Involved in unsaturated fatty acids biosynthesis. Catalyzes the dehydration of short chain beta-hydroxyacyl-ACPs and long chain saturated and unsaturated beta-hydroxyacyl-ACPs. In Halalkalibacterium halodurans (strain ATCC BAA-125 / DSM 18197 / FERM 7344 / JCM 9153 / C-125) (Bacillus halodurans), this protein is 3-hydroxyacyl-[acyl-carrier-protein] dehydratase FabZ.